Reading from the N-terminus, the 69-residue chain is MSDEEVVDPKATLEVSCKPKCVRQLKEYQACTKRVEGDESGHKHCTGQYFDYWHCIDKCVAAKLFDHLK.

2 cysteine pairs are disulfide-bonded: Cys17-Cys59 and Cys31-Cys45.

Belongs to the UQCRH/QCR6 family. In terms of assembly, component of the ubiquinol-cytochrome c oxidoreductase (cytochrome b-c1 complex, complex III, CIII), a multisubunit enzyme composed of 3 respiratory subunits cytochrome b, cytochrome c1 and Rieske protein, 2 core protein subunits, and additional low-molecular weight protein subunits. The complex exists as an obligatory dimer and forms supercomplexes (SCs) in the inner mitochondrial membrane with cytochrome c oxidase (complex IV, CIV).

It is found in the mitochondrion inner membrane. Component of the ubiquinol-cytochrome c oxidoreductase, a multisubunit transmembrane complex that is part of the mitochondrial electron transport chain which drives oxidative phosphorylation. The respiratory chain contains 3 multisubunit complexes succinate dehydrogenase (complex II, CII), ubiquinol-cytochrome c oxidoreductase (cytochrome b-c1 complex, complex III, CIII) and cytochrome c oxidase (complex IV, CIV), that cooperate to transfer electrons derived from NADH and succinate to molecular oxygen, creating an electrochemical gradient over the inner membrane that drives transmembrane transport and the ATP synthase. The cytochrome b-c1 complex catalyzes electron transfer from ubiquinol to cytochrome c, linking this redox reaction to translocation of protons across the mitochondrial inner membrane, with protons being carried across the membrane as hydrogens on the quinol. In the process called Q cycle, 2 protons are consumed from the matrix, 4 protons are released into the intermembrane space and 2 electrons are passed to cytochrome c. The protein is Cytochrome b-c1 complex subunit 6 of Solanum tuberosum (Potato).